The following is a 796-amino-acid chain: ER degradation-enhancing alpha-mannosidase-like protein 1 (796 aa).

The first 20 residues, 1 to 20, serve as a signal peptide directing secretion; sequence MVCCLWVLLALLLHLDHVAC. The N-linked (GlcNAc...) asparagine glycan is linked to N86. E372 (proton donor) is an active-site residue. T495 contacts Ca(2+). Residues N517, N672, and N762 are each glycosylated (N-linked (GlcNAc...) asparagine).

Belongs to the glycosyl hydrolase 47 family. Interacts with PDI1. The cofactor is Ca(2+).

The protein resides in the endoplasmic reticulum lumen. It catalyses the reaction Hydrolysis of terminal, non-reducing alpha-D-mannose residues in alpha-D-mannosides.. The protein operates within protein modification; protein glycosylation. Its function is as follows. Alpha-1,2-specific exomannosidase involved in endoplasmic reticulum-associated degradation (ERAD). Delivers misfolded glycoproteins to proteasomes. Forms a complex with PDI1 to process unfolded protein-bound Man8GlcNAc2 oligosaccharides to Man7GlcNAc2, promoting degradation in unfolded protein response. This chain is ER degradation-enhancing alpha-mannosidase-like protein 1 (MNL1), found in Saccharomyces cerevisiae (strain ATCC 204508 / S288c) (Baker's yeast).